Here is a 610-residue protein sequence, read N- to C-terminus: Threonine--tRNA ligase (610 aa).

Residues 1-29 form a disordered region; it reads MANHDQQTVSSAAATTSASPSPVVLPKTS. A compositionally biased stretch (low complexity) spans 8–24; the sequence is TVSSAAATTSASPSPVV. The tract at residues 209–502 is catalytic; the sequence is DHRRIGKDLD…MTENYAGDYP (294 aa). Positions 302, 353, and 479 each coordinate Zn(2+).

This sequence belongs to the class-II aminoacyl-tRNA synthetase family. In terms of assembly, homodimer. Requires Zn(2+) as cofactor.

It is found in the cytoplasm. It catalyses the reaction tRNA(Thr) + L-threonine + ATP = L-threonyl-tRNA(Thr) + AMP + diphosphate + H(+). Functionally, catalyzes the attachment of threonine to tRNA(Thr) in a two-step reaction: L-threonine is first activated by ATP to form Thr-AMP and then transferred to the acceptor end of tRNA(Thr). Also edits incorrectly charged L-seryl-tRNA(Thr). This is Threonine--tRNA ligase from Synechococcus sp. (strain WH7803).